Consider the following 536-residue polypeptide: G-protein coupled receptor Mth2 (536 aa).

Residues 1–210 (MAERDHYHTI…DDNSTVKIIN (210 aa)) lie on the Extracellular side of the membrane. 5 disulfide bridges follow: C17-C71, C73-C78, C82-C177, C83-C96, and C138-C197. N-linked (GlcNAc...) asparagine glycans are attached at residues N24 and N33. N-linked (GlcNAc...) asparagine glycans are attached at residues N103, N113, N118, N159, N184, and N203. A helical membrane pass occupies residues 211 to 231 (AYAMMFSIPFMMLTIAVYLLI). Residues 232-241 (PELRNQHGKS) lie on the Cytoplasmic side of the membrane. Residues 242 to 262 (LVCYLVGLTVGYTSLCYVQLY) traverse the membrane as a helical segment. Residues 263–273 (QVDATGDACKV) lie on the Extracellular side of the membrane. The helical transmembrane segment at 274–294 (FGYTAYFFFMGAYMWLSVISF) threads the bilayer. Over 295–314 (DLWHNFRGTRGINRFQEKKR) the chain is Cytoplasmic. A helical transmembrane segment spans residues 315–335 (FLFYSLYSWGIAVVFLAFTYI). The Extracellular portion of the chain corresponds to 336–365 (AQELTNLPAYLKPGIGDGVYCWLDMSNWAA). The helical transmembrane segment at 366–386 (MIYFYGPILVIVVANTIMFIM) threads the bilayer. Residues 387-417 (TAIKIHGVQREMARIIASENSTKNLRTEKDK) are Cytoplasmic-facing. A helical membrane pass occupies residues 418–438 (FGLFLRLFLIMGITWLTELIS). Topologically, residues 439–449 (YFVGSDKGWSK) are extracellular. Residues 450–470 (LFYISDLANAMQGFLIFMLFV) traverse the membrane as a helical segment. At 471 to 536 (MKKKVKHLIT…VDPQKTTIFR (66 aa)) the chain is on the cytoplasmic side. The tract at residues 487–506 (RDGSNQRQSQYSTKTTSSSV) is disordered. The span at 492-505 (QRQSQYSTKTTSSS) shows a compositional bias: low complexity.

The protein belongs to the G-protein coupled receptor 2 family. Mth subfamily. As to quaternary structure, homodimer.

The protein resides in the cell membrane. Functionally, involved in biological aging and stress response. Essential for adult survival. This is G-protein coupled receptor Mth2 (mth2) from Drosophila yakuba (Fruit fly).